Here is a 103-residue protein sequence, read N- to C-terminus: Small ribosomal subunit protein uS10 (103 aa).

Belongs to the universal ribosomal protein uS10 family. In terms of assembly, part of the 30S ribosomal subunit.

In terms of biological role, involved in the binding of tRNA to the ribosomes. In Marinomonas sp. (strain MWYL1), this protein is Small ribosomal subunit protein uS10.